The chain runs to 286 residues: Beta-lactamase TEM (286 aa).

The signal sequence occupies residues 1–23 (MSIQHFRVALIPFFAAFCLPVFA). Ser68 acts as the Acyl-ester intermediate in catalysis. A disulfide bridge connects residues Cys75 and Cys121. The active-site Proton acceptor is the Glu166. Position 232-234 (232-234 (KSG)) interacts with substrate.

It belongs to the class-A beta-lactamase family.

It catalyses the reaction a beta-lactam + H2O = a substituted beta-amino acid. TEM-type are the most prevalent beta-lactamases in enterobacteria; they hydrolyze the beta-lactam bond in susceptible beta-lactam antibiotics, thus conferring resistance to penicillins and cephalosporins. TEM-3 and TEM-4 are capable of hydrolyzing cefotaxime and ceftazidime. TEM-5 is capable of hydrolyzing ceftazidime. TEM-6 is capable of hydrolyzing ceftazidime and aztreonam. TEM-8/CAZ-2, TEM-16/CAZ-7 and TEM-24/CAZ-6 are markedly active against ceftazidime. IRT-4 shows resistance to beta-lactamase inhibitors. This chain is Beta-lactamase TEM (bla), found in Escherichia coli.